The following is a 480-amino-acid chain: UDP-N-acetylmuramate--L-alanine ligase (480 aa).

129–135 (GTHGKTT) provides a ligand contact to ATP.

It belongs to the MurCDEF family.

Its subcellular location is the cytoplasm. It catalyses the reaction UDP-N-acetyl-alpha-D-muramate + L-alanine + ATP = UDP-N-acetyl-alpha-D-muramoyl-L-alanine + ADP + phosphate + H(+). The protein operates within cell wall biogenesis; peptidoglycan biosynthesis. Its function is as follows. Cell wall formation. The sequence is that of UDP-N-acetylmuramate--L-alanine ligase from Mannheimia succiniciproducens (strain KCTC 0769BP / MBEL55E).